Here is a 280-residue protein sequence, read N- to C-terminus: Urease accessory protein UreD (280 aa).

This sequence belongs to the UreD family. As to quaternary structure, ureD, UreF and UreG form a complex that acts as a GTP-hydrolysis-dependent molecular chaperone, activating the urease apoprotein by helping to assemble the nickel containing metallocenter of UreC. The UreE protein probably delivers the nickel.

The protein localises to the cytoplasm. In terms of biological role, required for maturation of urease via the functional incorporation of the urease nickel metallocenter. This chain is Urease accessory protein UreD, found in Mesorhizobium japonicum (strain LMG 29417 / CECT 9101 / MAFF 303099) (Mesorhizobium loti (strain MAFF 303099)).